Here is a 782-residue protein sequence, read N- to C-terminus: Gelsolin (782 aa).

A signal peptide spans 1-27 (MAPHRPAPALLCALSLALCALSLPVRA). The tract at residues 53 to 176 (VVEHPEFLKA…YKKGGVASGF (124 aa)) is actin-severing. The Gelsolin-like 1 repeat unit spans residues 76–158 (FDLVPVPTNL…VQGFESATFL (83 aa)). Phosphotyrosine; by SRC; in vitro is present on Y86. G92, D93, E124, D136, G141, and A143 together coordinate Ca(2+). The actin-actin interfilament contact point stretch occupies residues 123-126 (DESG). 162–169 (KSGLKYKK) provides a ligand contact to a 1,2-diacyl-sn-glycero-3-phospho-(1D-myo-inositol-4,5-bisphosphate). Ca(2+) is bound at residue V172. 188–196 (RLFQVKGRR) contacts a 1,2-diacyl-sn-glycero-3-phospho-(1D-myo-inositol-4,5-bisphosphate). A Gelsolin-like 2 repeat occupies 198 to 270 (VRATEVPVSW…SEEGTEPEAM (73 aa)). Residues G213 and D214 each coordinate Ca(2+). C215 and C228 are joined by a disulfide. Position 236 (E236) interacts with Ca(2+). Residues 247–262 (IRDNERSGRARVHVSE) show a composition bias toward basic and acidic residues. Positions 247–285 (IRDNERSGRARVHVSEEGTEPEAMLQVLGPKPALPAGTE) are disordered. The Ca(2+) site is built by D286, E329, D330, and E354. The stretch at 317–389 (DENPFAQGAL…LPEGGETPLF (73 aa)) is one Gelsolin-like 3 repeat. Position 409 is a phosphotyrosine; by SRC; in vitro (Y409). Residues 434 to 782 (AAQHGMDDDG…LDRAMAELAA (349 aa)) are actin-binding, Ca-sensitive. The stretch at 455–536 (SNKVPVDPAT…VQGKEPAHLM (82 aa)) is one Gelsolin-like 4 repeat. Y465 is subject to Phosphotyrosine; by SRC. Residues G471, D472, E502, D514, G519, P521, and T551 each contribute to the Ca(2+) site. Residues 576 to 642 (TRAVEVLPKA…AEGSEPDGFW (67 aa)) form a Gelsolin-like 5 repeat. K584 is modified (N6-acetyllysine). The Ca(2+) site is built by N591 and D592. Residue Y603 is modified to Phosphotyrosine; by SRC; in vitro. A Ca(2+)-binding site is contributed by E614. Y651 carries the post-translational modification Phosphotyrosine; by SRC; in vitro. The stretch at 681 to 756 (IEEVPGELMQ…VKQGFEPPSF (76 aa)) is one Gelsolin-like 6 repeat. The Ca(2+) site is built by D696, D697, and E719. T742 is subject to Phosphothreonine.

It belongs to the villin/gelsolin family. Binds to actin and to fibronectin. Identified in a complex composed of ACTA1, COBL, GSN and TMSB4X. Interacts with the inactive form of EIF2AK2/PKR. Interacts with FLII. Post-translationally, phosphorylation on Tyr-86, Tyr-409, Tyr-465, Tyr-603 and Tyr-651 in vitro is induced in presence of phospholipids. As to expression, phagocytic cells, platelets, fibroblasts, nonmuscle cells, smooth and skeletal muscle cells.

The protein localises to the cytoplasm. It is found in the cytoskeleton. Its subcellular location is the secreted. Calcium-regulated, actin-modulating protein that binds to the plus (or barbed) ends of actin monomers or filaments, preventing monomer exchange (end-blocking or capping). It can promote the assembly of monomers into filaments (nucleation) as well as sever filaments already formed. Plays a role in ciliogenesis. The chain is Gelsolin (GSN) from Homo sapiens (Human).